The sequence spans 492 residues: ATP synthase subunit beta, chloroplastic (492 aa).

170-177 (GGAGVGKT) lines the ATP pocket.

It belongs to the ATPase alpha/beta chains family. F-type ATPases have 2 components, CF(1) - the catalytic core - and CF(0) - the membrane proton channel. CF(1) has five subunits: alpha(3), beta(3), gamma(1), delta(1), epsilon(1). CF(0) has four main subunits: a(1), b(1), b'(1) and c(9-12).

It localises to the plastid. The protein resides in the chloroplast thylakoid membrane. It carries out the reaction ATP + H2O + 4 H(+)(in) = ADP + phosphate + 5 H(+)(out). Its function is as follows. Produces ATP from ADP in the presence of a proton gradient across the membrane. The catalytic sites are hosted primarily by the beta subunits. The polypeptide is ATP synthase subunit beta, chloroplastic (Angiopteris lygodiifolia (Turnip fern)).